A 655-amino-acid polypeptide reads, in one-letter code: Broad substrate specificity ATP-binding cassette transporter ABCG2 (655 aa).

Topologically, residues Met-1–Ser-395 are cytoplasmic. The region spanning Leu-37 to Ala-286 is the ABC transporter domain. Residues Gly-80–Ser-87, Arg-184–Glu-190, Glu-211, and His-243 each bind ATP. Thr-362 is modified (phosphothreonine; by PIM1). The ABC transmembrane type-2 domain maps to Leu-389 to Leu-651. A helical transmembrane segment spans residues Ile-396 to Leu-416. Over Lys-417–Gly-428 the chain is Extracellular. The chain crosses the membrane as a helical span at residues Val-429–Val-449. Topologically, residues Val-450–Asp-477 are cytoplasmic. The helical transmembrane segment at Leu-478–Gly-498 threads the bilayer. The Extracellular segment spans residues Leu-499–Phe-506. A helical membrane pass occupies residues Phe-507–Ile-527. Residues Ala-528 to Ser-535 lie on the Cytoplasmic side of the membrane. The chain crosses the membrane as a helical span at residues Val-536 to Val-556. Residues Asn-557–His-630 are Extracellular-facing. Residues Cys-592 and Cys-608 are joined by a disulfide bond. N-linked (GlcNAc...) asparagine glycosylation occurs at Asn-596. A helical membrane pass occupies residues Val-631–Leu-651. The Cytoplasmic portion of the chain corresponds to Lys-652–Ser-655.

The protein belongs to the ABC transporter superfamily. ABCG family. Eye pigment precursor importer (TC 3.A.1.204) subfamily. In terms of assembly, homodimer; disulfide-linked. The minimal functional unit is a homodimer, but the major oligomeric form in plasma membrane is a homotetramer with possibility of higher order oligomerization up to homododecamers. In terms of processing, N-glycosylated. Glycosylation-deficient ABCG2 is normally expressed and functional. Post-translationally, phosphorylated. Phosphorylation at Thr-362 by PIM1 is induced by drugs like mitoxantrone and is associated with cells increased drug resistance. It regulates the localization to the plasma membrane, the homooligomerization and therefore, the activity of the transporter. In terms of tissue distribution, highly expressed in placenta. Low expression in small intestine, liver and colon. Expressed in brain (at protein level).

The protein localises to the cell membrane. It localises to the apical cell membrane. Its subcellular location is the mitochondrion membrane. The enzyme catalyses ATP + H2O + xenobioticSide 1 = ADP + phosphate + xenobioticSide 2.. It carries out the reaction urate(in) + ATP + H2O = urate(out) + ADP + phosphate + H(+). It catalyses the reaction indoxyl sulfate(in) + ATP + H2O = indoxyl sulfate(out) + ADP + phosphate + H(+). The catalysed reaction is sphing-4-enine 1-phosphate(in) + ATP + H2O = sphing-4-enine 1-phosphate(out) + ADP + phosphate + H(+). The enzyme catalyses estrone 3-sulfate(in) + ATP + H2O = estrone 3-sulfate(out) + ADP + phosphate + H(+). It carries out the reaction dehydroepiandrosterone 3-sulfate(in) + ATP + H2O = dehydroepiandrosterone 3-sulfate(out) + ADP + phosphate + H(+). It catalyses the reaction 4-methylumbelliferone sulfate(in) + ATP + H2O = 4-methylumbelliferone sulfate(out) + ADP + phosphate + H(+). The catalysed reaction is 5,7-dimethyl-2-methylamino-4-(3-pyridylmethyl)-1,3-benzothiazol-6-yl beta-D-glucuronate(in) + ATP + H2O = 5,7-dimethyl-2-methylamino-4-(3-pyridylmethyl)-1,3-benzothiazol-6-yl beta-D-glucuronate(out) + ADP + phosphate + H(+). The enzyme catalyses 4-methylumbelliferone beta-D-glucuronate(in) + ATP + H2O = 4-methylumbelliferone beta-D-glucuronate(out) + ADP + phosphate + H(+). It carries out the reaction 5,7-dimethyl-2-methylamino-4-(3-pyridylmethyl)-1,3-benzothiazol-6-yl sulfate(in) + ATP + H2O = 5,7-dimethyl-2-methylamino-4-(3-pyridylmethyl)-1,3-benzothiazol-6-yl sulfate(out) + ADP + phosphate + H(+). It catalyses the reaction 17beta-estradiol 17-O-(beta-D-glucuronate)(in) + ATP + H2O = 17beta-estradiol 17-O-(beta-D-glucuronate)(out) + ADP + phosphate + H(+). The catalysed reaction is methotrexate(in) + ATP + H2O = methotrexate(out) + ADP + phosphate + H(+). The enzyme catalyses riboflavin(in) + ATP + H2O = riboflavin(out) + ADP + phosphate + H(+). It carries out the reaction pheophorbide a(in) + ATP + H2O = pheophorbide a(out) + ADP + phosphate + H(+). It catalyses the reaction itaconate(in) + ATP + H2O = itaconate(out) + ADP + phosphate + H(+). Specifically inhibited by the fungal toxin fumitremorgin C and Ko143. In terms of biological role, broad substrate specificity ATP-dependent transporter of the ATP-binding cassette (ABC) family that actively extrudes a wide variety of physiological compounds, dietary toxins and xenobiotics from cells. Involved in porphyrin homeostasis, mediating the export of protoporphyrin IX (PPIX) from both mitochondria to cytosol and cytosol to extracellular space, it also functions in the cellular export of heme. Also mediates the efflux of sphingosine-1-P from cells. Acts as a urate exporter functioning in both renal and extrarenal urate excretion. In kidney, it also functions as a physiological exporter of the uremic toxin indoxyl sulfate. Also involved in the excretion of steroids like estrone 3-sulfate/E1S, 3beta-sulfooxy-androst-5-en-17-one/DHEAS, and other sulfate conjugates. Mediates the secretion of the riboflavin and biotin vitamins into milk. Extrudes pheophorbide a, a phototoxic porphyrin catabolite of chlorophyll, reducing its bioavailability. Plays an important role in the exclusion of xenobiotics from the brain. It confers to cells a resistance to multiple drugs and other xenobiotics including mitoxantrone, pheophorbide, camptothecin, methotrexate, azidothymidine, and the anthracyclines daunorubicin and doxorubicin, through the control of their efflux. In placenta, it limits the penetration of drugs from the maternal plasma into the fetus. May play a role in early stem cell self-renewal by blocking differentiation. In inflammatory macrophages, exports itaconate from the cytosol to the extracellular compartment and limits the activation of TFEB-dependent lysosome biogenesis involved in antibacterial innate immune response. The chain is Broad substrate specificity ATP-binding cassette transporter ABCG2 (ABCG2) from Homo sapiens (Human).